Reading from the N-terminus, the 459-residue chain is Zinc finger chaperone zpr1 (459 aa).

2 consecutive C4-type zinc fingers follow at residues 38–70 and 259–291; these read CMECGKNGTTKLLLTVIPYFREVVLMSFECPHC and CPSCSHQCDTHMKLLDIPHFKEVIIMSTVCDRC.

It belongs to the ZPR1 family.

The protein resides in the cytoplasm. It localises to the nucleus. Acts as a protein folding chaperone for elongation factor 1-alpha. The sequence is that of Zinc finger chaperone zpr1 from Schizosaccharomyces pombe (strain 972 / ATCC 24843) (Fission yeast).